A 356-amino-acid chain; its full sequence is Heparan sulfate 2-O-sulfotransferase 1 (356 aa).

The Cytoplasmic portion of the chain corresponds to 1-11; it reads MGLLRIMMPPK. Residues 12–28 traverse the membrane as a helical; Signal-anchor for type II membrane protein segment; the sequence is LQLLAVLTFGVLMLFLE. Residues 24–51 adopt a coiled-coil conformation; sequence MLFLENQIQNLEESREKLERAIARHEVR. The Lumenal segment spans residues 29–356; the sequence is NQIQNLEESR…FYEKIYPKSN (328 aa). Adenosine 3',5'-bisphosphate is bound by residues Lys-83, Thr-84, Ala-85, Ser-86, Thr-87, and Ser-88. N-linked (GlcNAc...) asparagine glycosylation is found at Asn-108 and Asn-127. Residues His-140 and His-142 contribute to the active site. Adenosine 3',5'-bisphosphate-binding residues include Arg-164 and Ser-172. 2 cysteine pairs are disulfide-bonded: Cys-201–Cys-209 and Cys-222–Cys-228. Adenosine 3',5'-bisphosphate-binding residues include Tyr-279, Ser-285, Thr-290, and Lys-293.

This sequence belongs to the sulfotransferase 3 family. Homotrimer.

Its subcellular location is the golgi apparatus membrane. Functionally, catalyzes the transfer of a sulfo group from 3'-phospho-5'-adenylyl sulfate (PAPS) to the 2-OH position of iduronic acid (IdoA) or glucuronic acid (GlcA) within the heparan sulfate (HS) chain and participates in HS biosynthesis. This is Heparan sulfate 2-O-sulfotransferase 1 from Xenopus laevis (African clawed frog).